A 2439-amino-acid polypeptide reads, in one-letter code: MPAAADWRLLMGMDPEDLGDEDEKICDLILMVKPRDLKADDSEKMIQLFRISQTLLRMKLDEIKCAYEVVDSAGAEQARIENELKAKVLKLESELEMAQRVMGGGDKHFLRDEIRQLESHLERKEKEVTQLEKEMGKERKSNEELALRAEEAEEKNRKLKREIKQLTRKNEQLQQDIEFYRKEAEQRESLQTKEESNEIQRRLTKANQQLYQCMEELQHAEDMAANLRSENEHLQKNLEESVKEMEKMTDEYNKMKIAVQQTDAIMDQLRKDRDHAKLQVRELTDQIQARVEEDDPVMAAVNAKVEEWKSVLSGKDLEILEYQQMIRDLREKLRTAQMDSDKSNIIALQQAVQERDNQIKMLSEQVEQYTTEMERNAMLIEELKRPLKKDKGHSSDHQRRLEDLSAKLQVAERKVLEAQRAAQLAERDARDKDKELNDTLSRIRLYESGTDGLEAAISEIKECKNQIRVRDREIEGMIKEINQLEMKINNLLDENEDLRERLGLNPKEELDLSEFRRSKILKQRQYKAENQVLLKEIERLEEERLELKQRIRALVKDKGVTVVSNSLLDNSVEEKPVRSLRPSSGSTDDEIKRKNERLQKELSNKEKELELRRSESAQFKAKLNEMLNENKQLEQGMKEILQAIQDTQKKTPTSTGVSIPSLERLVNALEMKYSEGKFDASLHLRTQVDQLTGRNEELRLEMKTAREEAANTLSQLTKANEKIARLESEMESMSKSTGSSIPHKTLALPEEMTPTSAEAINALNEYTVQLLQEIKNKGDSIEQLGSALEEYKRKFAVIRHQQGLLYKEHQSERESWQKERDSFAELKSKLEEQREVDAVKIKEYNHLLETLEKDPSEIRREMAETGRKIVVLRVNEKCLTRRYTTLLELEQHLRKENAKLKEDFTQMQAVVTERIGYLQRFKEMAAFKMASLQKSLDVSVPASELERANKQYTELTIKYRNLLQKDNHLVQKTTSLEHLETENMSLRERIDSINKELEISKEKLHTLEQAFENISTTGGEIIMDKATKAVANSEIVSVSRRITTLEMKELNERQRAEHAQKMYEHLRNSLKQVEERNFELETKFAELTKLNLEAQRIERELRDELADSVSKHISDADRKRITELEKTEANLRIEVSKLREVSDVAKMQVSALDARQQSREKEVESLRRQVLDYQAESDEKALIAKLHQHIVALQLSETTAISRLEATNTRLQKLEAQKLRDEQKLDEQQQALWHARQEGHQRARHLRHTIQALRRQFSGALPLAQQEKFSNTMLHLQEDRARVREDAQIAEEERRKAEGKAQELELKLKGLEELIATLKDAKGAQKVSEWHKKLEDVRLLEMRQSRELNTQREEIKYLKNCVAEQECTISGLEEELVQQNNLLEERQLIWDQREVQLERQLDSYEKQQNEVLNTAQKFEEATGSLPDPNQPLANQLDYALGKIKEHVRTILETKTTCKILEEKLKEKEAALWSSEQNVLSRDKVINELRLRLPAAAEREKLLADLSKQEDSESQPTLKVAHQTINNLQGRLDQKEEVLKKYQNLLGKARQEQEEIAKRHEEEVRALHQKLDVYMDTSLDRFKQTALELIKKPTITVPTSKHLVRLAEMEQTVAEQDNSLSSLSQKLKIVTQELDQQRQVTAAQAMEHAADMARLEDKHAAQMKGLSQEAEELRAQLIQMEKELHYLRTELEAQKEANVRSPSNTMKNLVERLKNQLALKEKQLKALSKALLELRAELTSQAEQQIITNAAQKEEALNVQQIVDKQTKELRACVRDLNEELQLAKDGVRAAKARENSLKEDLETLNKDLQRSQKSQNKLQSEKEALEEHLNELKKKIQRLSSGLQAQVESDGPTVDSLQKKIRKLEHELDRKSISEPADKRSTLKEDKSSKEEVVRWEEGKKWQARVDKMRNVLKEKEREVDSQAKQLATMKELYSRLEQEKVSLQKKLKGRGVTADQVVGARTLEADKEIEELHKRNAELEQQIKVMKQQQALPRDAAMEDITIRNRYLEERLYSMESRLSKEPPSRPSTSGRGSDTPSQREHEFQKENLRLSTENLELRFQLEQANKDLPRLKDQVSDLKEMCSVLKKEKAEVEKRLSHLRGSGRSGKTIPELEKTIGLMKKVVEKVQRENENLKKTSEVNVQEQLATLERDHEKLKSEYEKLKGKQEEQLNSRLESKTKGIEKIMMENERLRKEIKKEAEAAEKLRVAKASLEVANEKLKAELEETHQRLLLAQSKGATLLGVDSKTWKSSVVTRLFENKMKGLESDIAKKNISISELKVQLKEANEKLQATQHTVIQLKEQVELLKNVPVEATTDEGLAREYQSVRLANKQLEREKAQLLRQIQRNEVQLGTNKDGPGYTELQEQIKAANNEKKKLQDEVRKLTQELKHFDPTFFEELEDLKFNYNLEVKKNIVLEEQLKKLSDQFGVAIPDVSIN.

2 coiled-coil regions span residues 75–913 and 1271–1576; these read AEQA…VVTE and NTML…YMDT. 3 disordered regions span residues 1802-1824, 1867-1890, and 2017-2048; these read ETLNKDLQRSQKSQNKLQSEKEA, ELDRKSISEPADKRSTLKEDKSSK, and ESRLSKEPPSRPSTSGRGSDTPSQREHEFQKE. Positions 2039–2048 are enriched in basic and acidic residues; sequence SQREHEFQKE. Residues 2046–2394 are a coiled coil; that stretch reads QKENLRLSTE…KLTQELKHFD (349 aa).

Part of the tectonic-like complex (also named B9 complex).

The protein resides in the cytoplasm. It is found in the cytoskeleton. The protein localises to the microtubule organizing center. Its subcellular location is the centrosome. It localises to the centriolar satellite. The protein resides in the nucleus. It is found in the cilium basal body. Involved in early and late steps in cilia formation. May play a role in early ciliogenesis in the disappearance of centriolar satellites and in the transition of primary ciliar vesicles (PCVs) to capped ciliary vesicles (CCVs). In the ciliary transition zone is part of the tectonic-like complex which is required for tissue-specific ciliogenesis and may regulate ciliary membrane composition. Involved in regulation of the BBSome complex integrity and in ciliary targeting of selected BBSome cargos. Required for the correct localization of ciliary and phototransduction proteins in retinal photoreceptor cells; may play a role in ciliary transport processes. Involved in development of the nervous system and kidney. In Danio rerio (Zebrafish), this protein is Centrosomal protein of 290 kDa (cep290).